The chain runs to 366 residues: GTPase Obg (366 aa).

Positions 1–161 (MRFVDEARIQ…FNLRLELKIL (161 aa)) constitute an Obg domain. The disordered stretch occupies residues 121–148 (SGGRGGKGNEHFKSSTMRAPRFSQPGEP). An OBG-type G domain is found at 162–334 (ADAGLIGLPN…LVQELWQVCE (173 aa)). Residues 168–175 (GLPNAGKS), 193–197 (FTTLT), 217–220 (DIPG), 287–290 (NKID), and 315–317 (SAR) each bind GTP. Mg(2+) is bound by residues Ser-175 and Thr-195.

This sequence belongs to the TRAFAC class OBG-HflX-like GTPase superfamily. OBG GTPase family. In terms of assembly, monomer. Mg(2+) is required as a cofactor.

The protein resides in the cytoplasm. Functionally, an essential GTPase which binds GTP, GDP and possibly (p)ppGpp with moderate affinity, with high nucleotide exchange rates and a fairly low GTP hydrolysis rate. Plays a role in control of the cell cycle, stress response, ribosome biogenesis and in those bacteria that undergo differentiation, in morphogenesis control. The sequence is that of GTPase Obg from Desulfovibrio desulfuricans (strain ATCC 27774 / DSM 6949 / MB).